Reading from the N-terminus, the 98-residue chain is MASLLCCGPKLAACGIVLSAWGVIMLIMLGIFFNVHSAVLIEDVPFTEKDFENGPQNIYNLYEQVSYNCFIAAGLYLLLGGFSFCQVRLNKRKEYMVR.

The next 2 helical transmembrane spans lie at 13–33 (ACGI…GIFF) and 65–85 (VSYN…FSFC).

The protein belongs to the RNase K family. In terms of assembly, interacts with the proton translocation complex V0 of the V-ATPase. Interacts with ATP6AP1.

The protein resides in the endomembrane system. The protein localises to the cytoplasmic vesicle. Its subcellular location is the clathrin-coated vesicle membrane. Its function is as follows. Endoribonuclease which preferentially cleaves ApU and ApG phosphodiester bonds. Hydrolyzes UpU bonds at a lower rate. Regulates the activity of vacuolar (H+)-ATPase (V-ATPase) which is responsible for acidifying and maintaining the pH of intracellular compartments. Required at an early stage of receptor-mediated endocytosis. The chain is Ribonuclease kappa (Rnasek) from Mus musculus (Mouse).